The sequence spans 239 residues: Probable transcriptional regulatory protein RBAM_007230 (239 aa).

It belongs to the TACO1 family. YeeN subfamily.

It localises to the cytoplasm. In Bacillus velezensis (strain DSM 23117 / BGSC 10A6 / LMG 26770 / FZB42) (Bacillus amyloliquefaciens subsp. plantarum), this protein is Probable transcriptional regulatory protein RBAM_007230.